We begin with the raw amino-acid sequence, 577 residues long: Proline--tRNA ligase (577 aa).

It belongs to the class-II aminoacyl-tRNA synthetase family. ProS type 1 subfamily. As to quaternary structure, homodimer.

Its subcellular location is the cytoplasm. The catalysed reaction is tRNA(Pro) + L-proline + ATP = L-prolyl-tRNA(Pro) + AMP + diphosphate. Its function is as follows. Catalyzes the attachment of proline to tRNA(Pro) in a two-step reaction: proline is first activated by ATP to form Pro-AMP and then transferred to the acceptor end of tRNA(Pro). As ProRS can inadvertently accommodate and process non-cognate amino acids such as alanine and cysteine, to avoid such errors it has two additional distinct editing activities against alanine. One activity is designated as 'pretransfer' editing and involves the tRNA(Pro)-independent hydrolysis of activated Ala-AMP. The other activity is designated 'posttransfer' editing and involves deacylation of mischarged Ala-tRNA(Pro). The misacylated Cys-tRNA(Pro) is not edited by ProRS. The chain is Proline--tRNA ligase from Janthinobacterium sp. (strain Marseille) (Minibacterium massiliensis).